The sequence spans 248 residues: PF03932 family protein CutC (248 aa).

It belongs to the CutC family. Homodimer.

It is found in the cytoplasm. The polypeptide is PF03932 family protein CutC (Escherichia coli O17:K52:H18 (strain UMN026 / ExPEC)).